The primary structure comprises 169 residues: Lachrymatory-factor synthase (169 aa).

A propeptide spanning residues 1–12 (MELNPGAPAVVA) is cleaved from the precursor. Active-site proton donor/acceptor residues include glutamate 88 and tyrosine 102.

It is found in the vacuole. It catalyses the reaction (E)-prop-1-en-1-SO-peroxol = (Z)-propanethial S-oxide. It carries out the reaction (E)-alk-1-en-1-SO-peroxol = (Z)-alkanethial oxide. Functionally, produces lacrymatory factor (propanthial S-oxide) from 1-propenylsulphenic acid, an unstable compound resulting from the degradation of trans-1-propenyl-L-cysteine sulphoxide (PRENCSO) by alliinase. This Allium cepa (Onion) protein is Lachrymatory-factor synthase.